A 171-amino-acid polypeptide reads, in one-letter code: Peptide deformylase (171 aa).

Residues C91 and H133 each coordinate Fe cation. E134 is an active-site residue. Residue H137 coordinates Fe cation.

Belongs to the polypeptide deformylase family. Requires Fe(2+) as cofactor.

It carries out the reaction N-terminal N-formyl-L-methionyl-[peptide] + H2O = N-terminal L-methionyl-[peptide] + formate. Removes the formyl group from the N-terminal Met of newly synthesized proteins. Requires at least a dipeptide for an efficient rate of reaction. N-terminal L-methionine is a prerequisite for activity but the enzyme has broad specificity at other positions. The sequence is that of Peptide deformylase from Sodalis glossinidius (strain morsitans).